We begin with the raw amino-acid sequence, 475 residues long: Coagulation factor X (475 aa).

The first 20 residues, 1–20, serve as a signal peptide directing secretion; the sequence is MAGRLLLLLLCAALPDELRA. A propeptide spanning residues 21 to 40 is cleaved from the precursor; it reads EGGVFIKKESADKFLERTKR. One can recognise a Gla domain in the interval 41–85; sequence ANSFLEEMKQGNIERECNEERCSKEEAREAFEDNEKTEEFWNIYV. Residues Glu46, Glu47, Glu54, Glu56, Glu59, Glu60, Glu65, Glu66, Glu69, Glu72, and Glu79 each carry the 4-carboxyglutamate modification. Cys57 and Cys62 are disulfide-bonded. In terms of domain architecture, EGF-like 1; calcium-binding spans 86-122; the sequence is DGDQCSSNPCHYGGQCKDGLGSYTCSCLDGYQGKNCE. Disulfide bonds link Cys90–Cys101, Cys95–Cys110, Cys112–Cys121, Cys129–Cys140, Cys136–Cys152, Cys154–Cys167, Cys175–Cys348, Cys247–Cys252, Cys267–Cys283, Cys396–Cys410, and Cys421–Cys449. Asp103 is subject to (3R)-3-hydroxyaspartate. The 44-residue stretch at 125–168 folds into the EGF-like 2 domain; that stretch reads IPKYCKINNGDCEQFCSIKKSVQKDVVCSCTSGYELAEDGKQCV. Residues 186-240 constitute a propeptide, activation peptide; sequence SVILPTNSNTNATSDQDVPSTNGSILEEVFTTTTESPTPPPRNGSSITDPNVDTR. N-linked (GlcNAc...) asparagine glycans are attached at residues Asn196, Asn207, and Asn228. The tract at residues 216–237 is disordered; it reads TTTTESPTPPPRNGSSITDPNV. Residues 241 to 473 form the Peptidase S1 domain; that stretch reads IVGGDECRPG…FLRWVRTVMR (233 aa). His282 (charge relay system) is an active-site residue. Residue Asn285 is glycosylated (N-linked (GlcNAc...) asparagine). The active-site Charge relay system is the Asp328. The Charge relay system role is filled by Ser425.

It belongs to the peptidase S1 family. The two chains are formed from a single-chain precursor by the excision of two Arg residues and are held together by 1 or more disulfide bonds. The vitamin K-dependent, enzymatic carboxylation of some glutamate residues allows the modified protein to bind calcium. Post-translationally, the activation peptide is cleaved by factor IXa (in the intrinsic pathway), or by factor VIIa (in the extrinsic pathway). In terms of processing, the iron and 2-oxoglutarate dependent 3-hydroxylation of aspartate and asparagine is (R) stereospecific within EGF domains. Liver and chorioallantoic membrane.

The protein localises to the secreted. The enzyme catalyses Selective cleavage of Arg-|-Thr and then Arg-|-Ile bonds in prothrombin to form thrombin.. In terms of biological role, factor Xa is a vitamin K-dependent glycoprotein that converts prothrombin to thrombin in the presence of factor Va, calcium and phospholipid during blood clotting. VAP cleaves the fusion proteins of Sendai virus, NDV, and influenza virus a at a specific single arginine-containing site, and plays a key role in the viral spreading in the allantoic sac. This chain is Coagulation factor X (F10), found in Gallus gallus (Chicken).